Here is a 106-residue protein sequence, read N- to C-terminus: UPF0145 protein GSU2791 (106 aa).

Belongs to the UPF0145 family.

This chain is UPF0145 protein GSU2791, found in Geobacter sulfurreducens (strain ATCC 51573 / DSM 12127 / PCA).